A 179-amino-acid chain; its full sequence is UPF0227 protein VP0969 (179 aa).

Belongs to the UPF0227 family.

This is UPF0227 protein VP0969 from Vibrio parahaemolyticus serotype O3:K6 (strain RIMD 2210633).